Reading from the N-terminus, the 225-residue chain is NAD(P)H-quinone oxidoreductase subunit K, chloroplastic (225 aa).

[4Fe-4S] cluster-binding residues include cysteine 43, cysteine 44, cysteine 108, and cysteine 139.

The protein belongs to the complex I 20 kDa subunit family. NDH is composed of at least 16 different subunits, 5 of which are encoded in the nucleus. Requires [4Fe-4S] cluster as cofactor.

The protein localises to the plastid. The protein resides in the chloroplast thylakoid membrane. It catalyses the reaction a plastoquinone + NADH + (n+1) H(+)(in) = a plastoquinol + NAD(+) + n H(+)(out). The enzyme catalyses a plastoquinone + NADPH + (n+1) H(+)(in) = a plastoquinol + NADP(+) + n H(+)(out). Its function is as follows. NDH shuttles electrons from NAD(P)H:plastoquinone, via FMN and iron-sulfur (Fe-S) centers, to quinones in the photosynthetic chain and possibly in a chloroplast respiratory chain. The immediate electron acceptor for the enzyme in this species is believed to be plastoquinone. Couples the redox reaction to proton translocation, and thus conserves the redox energy in a proton gradient. The polypeptide is NAD(P)H-quinone oxidoreductase subunit K, chloroplastic (Lepidium virginicum (Virginia pepperweed)).